A 384-amino-acid polypeptide reads, in one-letter code: Lipid-A-disaccharide synthase (384 aa).

It belongs to the LpxB family.

It catalyses the reaction a lipid X + a UDP-2-N,3-O-bis[(3R)-3-hydroxyacyl]-alpha-D-glucosamine = a lipid A disaccharide + UDP + H(+). The protein operates within bacterial outer membrane biogenesis; LPS lipid A biosynthesis. Functionally, condensation of UDP-2,3-diacylglucosamine and 2,3-diacylglucosamine-1-phosphate to form lipid A disaccharide, a precursor of lipid A, a phosphorylated glycolipid that anchors the lipopolysaccharide to the outer membrane of the cell. The polypeptide is Lipid-A-disaccharide synthase (lpxB) (Neisseria meningitidis serogroup A / serotype 4A (strain DSM 15465 / Z2491)).